The sequence spans 81 residues: Photosystem I iron-sulfur center (81 aa).

2 4Fe-4S ferredoxin-type domains span residues 2–31 and 39–68; these read AHSV…MISW and IASA…VRVY. [4Fe-4S] cluster-binding residues include Cys-11, Cys-14, Cys-17, Cys-21, Cys-48, Cys-51, Cys-54, and Cys-58.

The eukaryotic PSI reaction center is composed of at least 11 subunits. [4Fe-4S] cluster serves as cofactor.

Its subcellular location is the plastid. It is found in the chloroplast thylakoid membrane. It carries out the reaction reduced [plastocyanin] + hnu + oxidized [2Fe-2S]-[ferredoxin] = oxidized [plastocyanin] + reduced [2Fe-2S]-[ferredoxin]. Apoprotein for the two 4Fe-4S centers FA and FB of photosystem I (PSI); essential for photochemical activity. FB is the terminal electron acceptor of PSI, donating electrons to ferredoxin. The C-terminus interacts with PsaA/B/D and helps assemble the protein into the PSI complex. Required for binding of PsaD and PsaE to PSI. PSI is a plastocyanin-ferredoxin oxidoreductase, converting photonic excitation into a charge separation, which transfers an electron from the donor P700 chlorophyll pair to the spectroscopically characterized acceptors A0, A1, FX, FA and FB in turn. The chain is Photosystem I iron-sulfur center (psaC) from Anthoceros angustus (Hornwort).